Consider the following 1294-residue polypeptide: Ethylene-insensitive protein 2 (1294 aa).

Topologically, residues 1-12 are cytoplasmic; it reads MEAEIVNVRPQL. A helical transmembrane segment spans residues 13–33; it reads GFIQRMVPALLPVLLVSVGYI. Over 34–50 the chain is Extracellular; that stretch reads DPGKWVANIEGGARFGY. The chain crosses the membrane as a helical span at residues 51-71; it reads DLVAITLLFNFAAILCQYVAA. At 72–105 the chain is on the cytoplasmic side; the sequence is RISVVTGKHLAQICNEEYDKWTCMFLGIQAEFSA. A helical transmembrane segment spans residues 106–126; sequence ILLDLTMVVGVAHALNLLFGV. A topological domain (extracellular) is located at residue Glu-127. A helical membrane pass occupies residues 128–148; that stretch reads LSTGVFLAAMDAFLFPVFASF. The Cytoplasmic segment spans residues 149–155; that stretch reads LENGMAN. The chain crosses the membrane as a helical span at residues 156-176; sequence TVSIYSAGLVLLLYVSGVLLS. Residues 177 to 194 lie on the Extracellular side of the membrane; it reads QSEIPLSMNGVLTRLNGE. A helical membrane pass occupies residues 195 to 215; sequence SAFALMGLLGASIVPHNFYIH. At 216–237 the chain is on the cytoplasmic side; the sequence is SYFAGESTSSSDVDKSSLCQDH. Residues 238–258 form a helical membrane-spanning segment; sequence LFAIFGVFSGLSLVNYVLMNA. Topologically, residues 259–287 are extracellular; the sequence is AANVFHSTGLVVLTFHDALSLMEQVFMSP. The chain crosses the membrane as a helical span at residues 288–308; that stretch reads LIPVVFLMLLFFSSQITALAW. The Cytoplasmic portion of the chain corresponds to 309–334; the sequence is AFGGEVVLHDFLKIEIPAWLHRATIR. 2 helical membrane passes run 335-355 and 356-376; these read ILAVAPALYCVWTSGADGIYQ and LLIFTQVLVAMMLPCSVIPLF. Over 377 to 397 the chain is Cytoplasmic; sequence RIASSRQIMGVHKIPQVGEFL. The chain crosses the membrane as a helical span at residues 398-418; sequence ALTTFLGFLGLNVVFVVEMVF. The Extracellular portion of the chain corresponds to 419–440; sequence GSSDWAGGLRWNTVMGTSIQYT. A helical membrane pass occupies residues 441-461; sequence TLLVSSCASLCLILWLAATPL. The Cytoplasmic portion of the chain corresponds to 462–1294; sequence KSASNRAEAQ…KNVTAYGSLG (833 aa). Disordered stretches follow at residues 534-561 and 623-662; these read TDQEIRSSPPEERELDVKYSTSQVSSLK and ETEEATKAAPTSNFTVGSDGPPSFRSLSGEGGSGTGSLSR. The segment covering 536-550 has biased composition (basic and acidic residues); it reads QEIRSSPPEERELDV. 3 positions are modified to phosphoserine: Ser-645, Ser-659, and Ser-757. Thr-819 bears the Phosphothreonine mark. Position 924 is a phosphoserine (Ser-924). The Nuclear localization signal signature appears at 1262-1269; sequence LKRYKRRL. A disordered region spans residues 1269 to 1294; the sequence is LSNKPVGMNQDGPGSRKNVTAYGSLG. Position 1283 is a phosphoserine (Ser-1283).

It belongs to the NRAMP (TC 2.A.55) family. In terms of assembly, interacts (via NLS) with ETR1. Interacts (via C-terminus) with EER5 and the COP9 signalosome subunits CSN3, CSN6A and CSN6B. Interacts with ETP1 and ETP2. Interacts with CTR1. Interacts with all members of the ethylene receptor family, including ETR1, ETR2, ERS1, ERS2 and EIN4. Binds to MRF3/ECIP1. As to quaternary structure, interacts with several P-body components, such as XRN4/EIN5, PAB2, PAB4 and PAB8. Binds to ENAP1 in the presence of ethylene; this reaction facilitates its association with histone. In terms of processing, phosphorylated by CTR1 on at least 4 sites. Phosphorylation of Ser-645 and Ser-924 is involved in repressing EIN2 signaling. Loss of phosphorylation results in nuclear localization of the C-terminus of EIN2. As to expression, localized to the guard cells after methyl jasmonate treatment.

It localises to the endoplasmic reticulum membrane. It is found in the nucleus. The protein resides in the cytoplasm. In terms of biological role, central factor in signaling pathways regulated by ethylene (ET) and involved in various processes including development, plant defense, senescence, nucleotide sugar flux, and tropisms. Necessary for ethylene-mediated gene regulation, and for the induction of some genes by ozone. Acts downstream of ET receptors, and upstream of ethylene regulated transcription factors. Required for cytokinin-mediated processes. Seems to be implicated in cross-talk between ET, jasmonate and other pathways. Probably not involved in iron uptake. Has a short half-life and undergoes rapid proteasome-mediated turnover in the absence of ethylene. Required for ethylene-induced EIN3 stabilization via proteasomal degradation of EBF1/EBF2 proteins. Regulates the leaf senescence induced by methyl jasmonate, ethylene and abscisic acid. Required during salt stress to confer resistance. Trafficking signal inducing ethylene response. The nuclear localization is both necessary and sufficient to activate EIN3-mediated transcription and ethylene responses. Involved in ethylene (ET)-mediated signaling pathways by triggering histone acetylation of H3K14 and H3K23 in an ENAP1-dependent manner, thus influencing the expression of ethylene-responsive genes. Necessary and sufficient for 3'-UTR-mediated translational repression of EBF1 and EBF2 mRNAs. Ethylene induces EIN2-CEND to associate with 3' UTRs in cytoplasmic foci and target EBF1/2 mRNAs to cytoplasmic processing-body (P-body). MPK6 regulates the cleavage and nuclear translocation of EIN2-CEND under methyl jasmonate treatment. Required for EIN3 accumulation. The polypeptide is Ethylene-insensitive protein 2 (Arabidopsis thaliana (Mouse-ear cress)).